The following is a 202-amino-acid chain: Small ribosomal subunit protein uS3 (202 aa).

Residues 18–87 (LNEYLQRQLV…NPQIDVVEVP (70 aa)) enclose the KH type-2 domain.

The protein belongs to the universal ribosomal protein uS3 family. Part of the 30S ribosomal subunit.

Functionally, binds the lower part of the 30S subunit head. This is Small ribosomal subunit protein uS3 from Thermofilum pendens (strain DSM 2475 / Hrk 5).